Here is a 1172-residue protein sequence, read N- to C-terminus: DNA-directed RNA polymerases IV and V subunit 2 (1172 aa).

Position 786 (Asp-786) interacts with Mg(2+). The Zn(2+) site is built by Cys-1108, Cys-1111, Cys-1133, and Cys-1136. The segment at 1108-1136 (CRKCKTYANVIERTPSSGRKIRGPYCRVC) adopts a C4-type zinc-finger fold.

It belongs to the RNA polymerase beta chain family. In terms of assembly, component of the RNA polymerase IV and V complexes. Interacts with SSH1, NRPD1 and NRPE1. As to expression, mostly expressed in seedlings, flowers and roots, present ubiquitously, except in sperm cells.

The protein localises to the nucleus. It carries out the reaction RNA(n) + a ribonucleoside 5'-triphosphate = RNA(n+1) + diphosphate. Functionally, DNA-dependent RNA polymerase catalyzes the transcription of DNA into RNA using the four ribonucleoside triphosphates as substrates. Second largest component of RNA polymerases IV and V which mediate short-interfering RNAs (siRNA) accumulation and subsequent RNA-directed DNA methylation-dependent (RdDM) transcriptional gene silencing (TGS) of endogenous repeated sequences, including transposable elements. Proposed to contribute to the polymerase catalytic activity and forms the polymerase active center together with the largest subunit. Also required for full erasure of methylation when the RNA trigger is withdrawn. Required for intercellular RNA interference (RNAi) leading to systemic post-transcriptional gene silencing. Involved in the maintenance of post-transcriptional RNA silencing. During interphase, mediates siRNA-independent heterochromatin association and methylation into chromocenters and condensation and cytosine methylation at pericentromeric major repeats. Required for complete maintenance of the 35S promoter homology-dependent TGS in transgenic plants and for the initial establishment of DNA methylation. This Arabidopsis thaliana (Mouse-ear cress) protein is DNA-directed RNA polymerases IV and V subunit 2 (NRPD2).